Here is a 371-residue protein sequence, read N- to C-terminus: Gustatory and pheromone receptor 39a, isoform A (371 aa).

Residues 1 to 41 (MSKVCRDLRIYLRLLHIMGMMCWHFDSDHCQLVATSGSERY) are Cytoplasmic-facing. A helical membrane pass occupies residues 42-62 (AVVYAGCILVSTTAGFIFALL). Topologically, residues 63–80 (HPSRFHIAIYNQTGNFYE) are extracellular. N-linked (GlcNAc...) asparagine glycosylation occurs at Asn73. The chain crosses the membrane as a helical span at residues 81 to 101 (AVIFRSTCVVLFLVYVILYAW). At 102 to 127 (RHRYRDLVQHILRLNRRCASSCTNQQ) the chain is on the cytoplasmic side. The chain crosses the membrane as a helical span at residues 128–148 (FLHNIILYGMLTILCFGNYLH). The Extracellular segment spans residues 149–161 (GYTRAGLATLPLA). A helical transmembrane segment spans residues 162 to 182 (LCMLVYIFAFLVLCLLLMFFV). The Cytoplasmic segment spans residues 183-228 (SLKQVMTAGLIHYNQQLCQGDLISGLRGRQQILKLCGGELNECFGL). Residues 229-249 (LMLPIVALVLLMAPSGPFFLI) traverse the membrane as a helical segment. The Extracellular segment spans residues 250 to 263 (STVLEGKFRPDECL). A helical membrane pass occupies residues 264–284 (IMLLTSSTWDTPWMIMLVLML). The Cytoplasmic segment spans residues 285-340 (RTNGISEEANKTAKMLTKVPRTGTGLDRMIEKFLLKNLRQKPILTAYGFFALDKST). A helical transmembrane segment spans residues 341–361 (LFKLFTAIFTYMVILVQFKEM). The Extracellular portion of the chain corresponds to 362-371 (ENSTKSINKF). Asn363 is a glycosylation site (N-linked (GlcNAc...) asparagine).

The protein belongs to the insect chemoreceptor superfamily. Gustatory receptor (GR) family. Gr21a subfamily. As to expression, expressed in the adult labellar chemosensory neurons, and adult thorax and wing. In larvae, is expressed in neurons of the posterior pharyngeal sense organ.

It localises to the cell membrane. In terms of biological role, gustatory receptor which mediates acceptance or avoidance behavior, depending on its substrates. Plays a role in sustaining courtship behavior in males, possibly through the reception of a stimulating arrestant pheromone. This Drosophila melanogaster (Fruit fly) protein is Gustatory and pheromone receptor 39a, isoform A (Gr39a).